A 228-amino-acid polypeptide reads, in one-letter code: 2-hydroxy-3-keto-5-methylthiopentenyl-1-phosphate phosphatase (228 aa).

Belongs to the HAD-like hydrolase superfamily. MtnX family.

The enzyme catalyses 2-hydroxy-5-methylsulfanyl-3-oxopent-1-enyl phosphate + H2O = 1,2-dihydroxy-5-(methylsulfanyl)pent-1-en-3-one + phosphate. The protein operates within amino-acid biosynthesis; L-methionine biosynthesis via salvage pathway; L-methionine from S-methyl-5-thio-alpha-D-ribose 1-phosphate: step 4/6. Its function is as follows. Dephosphorylates 2-hydroxy-3-keto-5-methylthiopentenyl-1-phosphate (HK-MTPenyl-1-P) yielding 1,2-dihydroxy-3-keto-5-methylthiopentene (DHK-MTPene). This chain is 2-hydroxy-3-keto-5-methylthiopentenyl-1-phosphate phosphatase, found in Lysinibacillus sphaericus (strain C3-41).